The following is an 835-amino-acid chain: Leucine--tRNA ligase (835 aa).

The 'HIGH' region motif lies at 36–46; sequence PYPSGKIHVGH. Residues 602-606 carry the 'KMSKS' region motif; sequence KMSKS. Lys-605 serves as a coordination point for ATP.

This sequence belongs to the class-I aminoacyl-tRNA synthetase family.

The protein resides in the cytoplasm. It carries out the reaction tRNA(Leu) + L-leucine + ATP = L-leucyl-tRNA(Leu) + AMP + diphosphate. This Rickettsia rickettsii (strain Iowa) protein is Leucine--tRNA ligase.